Consider the following 121-residue polypeptide: Small ribosomal subunit protein uS13 (121 aa).

The tract at residues 97–121 is disordered; the sequence is VRGQRTRTNARTRRGARKTVAGKKK. Positions 100 to 121 are enriched in basic residues; sequence QRTRTNARTRRGARKTVAGKKK.

This sequence belongs to the universal ribosomal protein uS13 family. Part of the 30S ribosomal subunit. Forms a loose heterodimer with protein S19. Forms two bridges to the 50S subunit in the 70S ribosome.

In terms of biological role, located at the top of the head of the 30S subunit, it contacts several helices of the 16S rRNA. In the 70S ribosome it contacts the 23S rRNA (bridge B1a) and protein L5 of the 50S subunit (bridge B1b), connecting the 2 subunits; these bridges are implicated in subunit movement. Contacts the tRNAs in the A and P-sites. The protein is Small ribosomal subunit protein uS13 of Prochlorococcus marinus (strain MIT 9303).